Reading from the N-terminus, the 469-residue chain is Cytosolic beta-glucosidase (469 aa).

The substrate site is built by Gln-17, His-120, and Asn-164. The active-site Proton donor is the Glu-165. Tyr-309 is a binding site for substrate. Glu-373 acts as the Nucleophile in catalysis. Substrate contacts are provided by residues Trp-417 and 424–425 (EW).

Belongs to the glycosyl hydrolase 1 family. Klotho subfamily. The N-terminus is blocked. In terms of tissue distribution, present in hepatocytes (at protein level).

It is found in the cytoplasm. Its subcellular location is the cytosol. It catalyses the reaction Hydrolysis of terminal, non-reducing beta-D-glucosyl residues with release of beta-D-glucose.. The catalysed reaction is a beta-D-glucosyl-(1&lt;-&gt;1')-N-acylsphing-4-enine + H2O = an N-acylsphing-4-enine + D-glucose. It carries out the reaction a beta-D-galactosyl-(1&lt;-&gt;1')-N-acylsphing-4-enine + H2O = an N-acylsphing-4-enine + D-galactose. The enzyme catalyses beta-D-glucosyl-(1&lt;-&gt;1)-sphing-4-enine + H2O = sphing-4-enine + D-glucose. It catalyses the reaction beta-D-glucosyl-(1&lt;-&gt;1)-N-octadecanoylsphing-4-enine + H2O = N-octadecanoylsphing-4-enine + D-glucose. The catalysed reaction is beta-D-galactosyl-(1&lt;-&gt;1)-sphing-4-enine + H2O = sphing-4-enine + D-galactose. It carries out the reaction beta-D-galactosyl-(1&lt;-&gt;1')-N-octadecanoylsphing-4-enine + H2O = N-octadecanoylsphing-4-enine + D-galactose. The enzyme catalyses a beta-D-xylosyl-(1&lt;-&gt;1')-N-acylsphing-4-enine + cholesterol = cholesteryl 3-beta-D-xyloside + an N-acylsphing-4-enine. With respect to regulation, inhibited by 2,4-dinitrophenyl-2-fluoro-2-deoxy-beta-D-glucopyranoside. Neutral cytosolic beta-glycosidase with a broad substrate specificity that could play a role in the catabolism of glycosylceramides. Has a significant glucosylceramidase activity in vitro. However, that activity is relatively low and its significance in vivo is not clear. Hydrolyzes galactosylceramide/GalCer, glucosylsphingosine/GlcSph and galactosylsphingosine/GalSph. However, the in vivo relevance of these activities is unclear. It can also hydrolyze a broad variety of dietary glycosides including phytoestrogens, flavonols, flavones, flavanones and cyanogens in vitro and could therefore play a role in the metabolism of xenobiotics. Possesses transxylosylase activity in vitro using xylosylated ceramides/XylCers (such as beta-D-xylosyl-(1&lt;-&gt;1')-N-acylsphing-4-enine) as xylosyl donors and cholesterol as acceptor. Could also play a role in the catabolism of cytosolic sialyl free N-glycans. In Cavia porcellus (Guinea pig), this protein is Cytosolic beta-glucosidase.